A 495-amino-acid chain; its full sequence is Bile acid-sensitive ion channel (495 aa).

The tract at residues 1–30 (MEHTEKSQVHAEKGLLGKIKRYLSKRPLPS) is binds the plasma membrane and stabilizes the channel in the closed state. Over 1–61 (MEHTEKSQVH…NIAQNQNKVR (61 aa)) the chain is Cytoplasmic. The helical transmembrane segment at 62 to 82 (KVIWLAVVLGSVSLLVWQIYS) threads the bilayer. The Extracellular portion of the chain corresponds to 83-459 (RLVNYFTWPT…GLFCGASLIT (377 aa)). 6 disulfides stabilise this stretch: C112-C207, C185-C192, C298-C377, C315-C373, C328-C350, and C330-C342. Residues N147, N163, and N179 are each glycosylated (N-linked (GlcNAc...) asparagine). N-linked (GlcNAc...) asparagine glycosylation is found at N370, N405, and N421. Residues 454 to 456 (GAS) carry the GAS motif; ion selectivity filter motif. A helical transmembrane segment spans residues 460-480 (IIEIIEYFFTNFYWVLIFFLL). The Cytoplasmic segment spans residues 481–495 (KILETIQRTSPPQAV).

Belongs to the amiloride-sensitive sodium channel (TC 1.A.6) family. ASIC5 subfamily. As to quaternary structure, forms homotrimeric channels. In terms of tissue distribution, expressed by cholangiocytes (at protein level). Detected in cerebellum, brainstem, kidney, liver, hepatocytes, lung, intestine and embryo. In the cerebellum, restricted to interneurons in the granular layer, specifically in GRM1-expressing unipolar brush cells of the vestibulocerebellum.

The protein resides in the apical cell membrane. It is found in the cell membrane. It catalyses the reaction Na(+)(in) = Na(+)(out). It carries out the reaction Li(+)(in) = Li(+)(out). The catalysed reaction is K(+)(in) = K(+)(out). The enzyme catalyses H(+)(in) = H(+)(out). Its activity is regulated as follows. Inhibited by the diuretic drug amiloride. Contrary to its rat ortholog it is not inhibited by Ca(2+). Functionally, forms bile acid-gated sodium channels and may play a role in bile acid-dependent absorption and secretion by epithelial cells of the bile ducts. Displays high selectivity for sodium ions but can also permit the permeation of other cations. The gating could be indirect and the consequence of alterations of the membrane environment of the channel by bile acids. As a sodium channel of type II unipolar brush cells of the vestibulocerebellum, controlling the electrical activity of these cells, could play a role in motor coordination and balance. This is Bile acid-sensitive ion channel from Mus musculus (Mouse).